Here is a 731-residue protein sequence, read N- to C-terminus: E3 ubiquitin-protein ligase SMURF1 (731 aa).

The 120-residue stretch at 1–120 (MSNPGTRRNG…TGYQRLDLCK (120 aa)) folds into the C2 domain. S200 is subject to Phosphoserine. The tract at residues 216–237 (EVRGPLQTPQNRPHGHQSPELP) is disordered. WW domains are found at residues 234–267 (PELP…DPRI) and 280–313 (GPLP…DPRL). Glycyl lysine isopeptide (Lys-Gly) (interchain with G-Cter in ubiquitin) cross-links involve residues K355 and K357. One can recognise an HECT domain in the interval 394–731 (RPKDLKKRLM…VEETCGFAVE (338 aa)). Catalysis depends on C699, which acts as the Glycyl thioester intermediate.

Interacts with TRAF4. Interacts (via HECT domain) with FBXL15 (via LRR repeats). Interacts with SMAD7 and TGFBR1; SMAD7 recruits SMURF1 to TGFBR1 and regulates TGF-beta receptor degradation. Interacts with MAVS; the interaction is mediated by NDFIP1. Auto-ubiquitinated in presence of NDFIP1. Ubiquitinated by the SCF(FBXL15) complex at Lys-355 and Lys-357, leading to its degradation by the proteasome. Lys-357 is the primary ubiquitination site.

It is found in the cytoplasm. It localises to the cell membrane. The catalysed reaction is S-ubiquitinyl-[E2 ubiquitin-conjugating enzyme]-L-cysteine + [acceptor protein]-L-lysine = [E2 ubiquitin-conjugating enzyme]-L-cysteine + N(6)-ubiquitinyl-[acceptor protein]-L-lysine.. The protein operates within protein modification; protein ubiquitination. Its function is as follows. E3 ubiquitin-protein ligase that acts as a negative regulator of BMP signaling pathway. Mediates ubiquitination and degradation of SMAD1 and SMAD5, 2 receptor-regulated SMADs specific for the BMP pathway. Promotes ubiquitination and subsequent proteasomal degradation of TRAF family members and RHOA. Promotes ubiquitination and subsequent proteasomal degradation of MAVS. Acts as an antagonist of TGF-beta signaling by ubiquitinating TGFBR1 and targeting it for degradation. Plays a role in dendrite formation by melanocytes. The chain is E3 ubiquitin-protein ligase SMURF1 (Smurf1) from Mus musculus (Mouse).